A 378-amino-acid chain; its full sequence is UPF0754 membrane protein BCG9842_B4423 (378 aa).

The helical transmembrane segment at 357–377 (YLGALLGGIIGLVQGLLLLFL) threads the bilayer.

It belongs to the UPF0754 family.

The protein resides in the cell membrane. The polypeptide is UPF0754 membrane protein BCG9842_B4423 (Bacillus cereus (strain G9842)).